An 83-amino-acid chain; its full sequence is uncharacterized protein (83 aa).

The next 2 membrane-spanning stretches (helical) occupy residues 11-31 (FYCI…SFLL) and 48-68 (WHNL…HIWM).

The protein localises to the cell membrane. This is an uncharacterized protein from Bacillus subtilis (strain 168).